A 380-amino-acid chain; its full sequence is MQGRAIWAEGPIHSFDLPSSSLERGGQALKSGASKTHAYMDEEVGTSTAEAWTWIVPSLSFIQGFMAGQAVLLMLFLGLFRYFFMTSSPGTRAQQQADLLQRVHAVRTSMDMRSHVPPYARVPYEQGVQACVQDLLSQVRYDPSEHAPESLDWLNVLVAQLLMSYRMSILNAGMCAGRNEDMDEPALPSTANAEKTAAKLALERVLNEAMQGRATKHFLDRLVVTDIDMGCRYPTFSHARVRPALHAKSTLVEIDFEYMDALTLGIDTRMWLHFPQWRFGSLAANLCMRVERFAGTLVLEIGTLPEPTPVQARVCLHPNFVLDAHLSTILGSKSKLQDVPKIEELFLARLRSWLEHNVVWPHFWHIPLPGIGTSPADPLA.

Residues 1 to 64 (MQGRAIWAEG…IVPSLSFIQG (64 aa)) are Lumenal-facing. The chain crosses the membrane as a helical span at residues 65–85 (FMAGQAVLLMLFLGLFRYFFM). Residues 86–380 (TSSPGTRAQQ…IGTSPADPLA (295 aa)) are Cytoplasmic-facing. An SMP-LTD domain is found at 147-369 (APESLDWLNV…WPHFWHIPLP (223 aa)).

Belongs to the MMM1 family. As to quaternary structure, homodimer. Component of the ER-mitochondria encounter structure (ERMES) or MDM complex, composed of MMM1, MDM10, MDM12 and MDM34. An MMM1 homodimer associates with one molecule of MDM12 on each side in a pairwise head-to-tail manner, and the SMP-LTD domains of MMM1 and MDM12 generate a continuous hydrophobic tunnel for phospholipid trafficking.

It localises to the endoplasmic reticulum membrane. Functionally, component of the ERMES/MDM complex, which serves as a molecular tether to connect the endoplasmic reticulum (ER) and mitochondria. Components of this complex are involved in the control of mitochondrial shape and protein biogenesis, and function in nonvesicular lipid trafficking between the ER and mitochondria. The MDM12-MMM1 subcomplex functions in the major beta-barrel assembly pathway that is responsible for biogenesis of all outer membrane beta-barrel proteins, and acts in a late step after the SAM complex. The MDM10-MDM12-MMM1 subcomplex further acts in the TOM40-specific pathway after the action of the MDM12-MMM1 complex. Essential for establishing and maintaining the structure of mitochondria and maintenance of mtDNA nucleoids. The polypeptide is Maintenance of mitochondrial morphology protein 1 (Malassezia globosa (strain ATCC MYA-4612 / CBS 7966) (Dandruff-associated fungus)).